We begin with the raw amino-acid sequence, 1125 residues long: tRNA (34-2'-O)-methyltransferase regulator WDR6 (1125 aa).

M1 is subject to N-acetylmethionine. WD repeat units lie at residues 89-130 (SKGL…GNVA), 155-197 (TDRC…PDNK), 207-246 (GHVGVIFSMSYLESKGLLATASEDRSVRIWKVGDLRVPGG), 256-294 (GHSARVWQVKLLENYLISAGEDCVCLVWSHEGEILQAFR), 295-335 (GHQG…YPGL), 346-384 (SRPGALKAVTLAGSWRVLAVTDVGGLYLYDLEVKCWEQL), 433-475 (LFQG…TGKA), 489-528 (SKQRWHTCSAFLPPGDFLVCGDRRGSVLLFPARPCLFKKP), 567-605 (HGKQGVTSVTCHGGYVYSTGRDGSYYQLFVHGGRLQPVL), 611-650 (RGMNWIAGLRMAPDGSMVVLGFHANEFVVWSPRSHEKLHI), 652-692 (NCGG…IRPN), 725-765 (EHPD…GAAH), 767-798 (LTAVCNHISSVRALAVWGVGTPGGPQDSHPGL), 860-905 (TRYM…RILH), 912-958 (HHKR…DRGS), 982-1024 (AHSC…PELE), and 1047-1085 (AHAAHVTGIKILSPKLMVSASIDQRLTFWRLGNGEPTFM).

It belongs to the WD repeat WDR6 family. As to quaternary structure, interacts with FTSJ1; the interaction is direct, and required for 2'-O-methylation of position 34 in substrate tRNAs. Interacts with IRS4. Interacts with STK11/LKB1. Expressed in hypothalamus, hippocampus, cerebrum cortex and cerebellum.

It localises to the cytoplasm. Functionally, together with methyltransferase FTSJ1, methylates the 2'-O-ribose of nucleotides at position 34 of the tRNA anticodon loop of substrate tRNAs. Required for the correct positioning of the substrate tRNA for methylation. Required to suppress amino acid starvation-induced autophagy. Enhances the STK11/LKB1-induced cell growth suppression activity. The chain is tRNA (34-2'-O)-methyltransferase regulator WDR6 (Wdr6) from Rattus norvegicus (Rat).